The sequence spans 204 residues: Imidazoleglycerol-phosphate dehydratase (204 aa).

This sequence belongs to the imidazoleglycerol-phosphate dehydratase family.

It is found in the cytoplasm. It catalyses the reaction D-erythro-1-(imidazol-4-yl)glycerol 3-phosphate = 3-(imidazol-4-yl)-2-oxopropyl phosphate + H2O. Its pathway is amino-acid biosynthesis; L-histidine biosynthesis; L-histidine from 5-phospho-alpha-D-ribose 1-diphosphate: step 6/9. In Corynebacterium urealyticum (strain ATCC 43042 / DSM 7109), this protein is Imidazoleglycerol-phosphate dehydratase.